The primary structure comprises 818 residues: RNA-directed RNA polymerase (818 aa).

Residues 524 to 641 (PVAIGLDASR…IVERRNLKQI (118 aa)) form the RdRp catalytic domain.

This sequence belongs to the tombusviridae RNA polymerase family.

The catalysed reaction is RNA(n) + a ribonucleoside 5'-triphosphate = RNA(n+1) + diphosphate. In terms of biological role, RNA-dependent RNA polymerase that plays an essential role in the virus replication. The polypeptide is RNA-directed RNA polymerase (Tomato bushy stunt virus (strain Cherry) (TBSV)).